A 372-amino-acid polypeptide reads, in one-letter code: Tetraacyldisaccharide 4'-kinase (372 aa).

65–72 (TVGGTGKT) provides a ligand contact to ATP. The segment at 351–372 (QSTATGMADGLDKEHQDGQPAA) is disordered. Residues 360 to 372 (GLDKEHQDGQPAA) are compositionally biased toward basic and acidic residues.

The protein belongs to the LpxK family.

It catalyses the reaction a lipid A disaccharide + ATP = a lipid IVA + ADP + H(+). It functions in the pathway glycolipid biosynthesis; lipid IV(A) biosynthesis; lipid IV(A) from (3R)-3-hydroxytetradecanoyl-[acyl-carrier-protein] and UDP-N-acetyl-alpha-D-glucosamine: step 6/6. Transfers the gamma-phosphate of ATP to the 4'-position of a tetraacyldisaccharide 1-phosphate intermediate (termed DS-1-P) to form tetraacyldisaccharide 1,4'-bis-phosphate (lipid IVA). The sequence is that of Tetraacyldisaccharide 4'-kinase from Cupriavidus metallidurans (strain ATCC 43123 / DSM 2839 / NBRC 102507 / CH34) (Ralstonia metallidurans).